Consider the following 458-residue polypeptide: ATP synthase subunit beta (458 aa).

ATP is bound at residue 148–155 (GGAGVGKT).

It belongs to the ATPase alpha/beta chains family. As to quaternary structure, F-type ATPases have 2 components, CF(1) - the catalytic core - and CF(0) - the membrane proton channel. CF(1) has five subunits: alpha(3), beta(3), gamma(1), delta(1), epsilon(1). CF(0) has three main subunits: a(1), b(2) and c(9-12). The alpha and beta chains form an alternating ring which encloses part of the gamma chain. CF(1) is attached to CF(0) by a central stalk formed by the gamma and epsilon chains, while a peripheral stalk is formed by the delta and b chains.

It localises to the cell inner membrane. The catalysed reaction is ATP + H2O + 4 H(+)(in) = ADP + phosphate + 5 H(+)(out). Produces ATP from ADP in the presence of a proton gradient across the membrane. The catalytic sites are hosted primarily by the beta subunits. The sequence is that of ATP synthase subunit beta from Ectopseudomonas mendocina (strain ymp) (Pseudomonas mendocina).